A 623-amino-acid chain; its full sequence is Cell pattern formation-associated protein stuA (623 aa).

A compositionally biased stretch (polar residues) spans 13–31 (QHMQSAGQPQQPQTVTSGP). Residues 13-111 (QHMQSAGQPQ…DTTGQHPPPG (99 aa)) form a disordered region. One can recognise an HTH APSES-type domain in the interval 115-221 (RVTATLWEDE…HNIGALLYHP (107 aa)). Residues 149–170 (GTKLLNVAGMTRGRRDGILKSE) constitute a DNA-binding region (H-T-H motif). 2 disordered regions span residues 232–270 (AAAE…PQSS) and 332–623 (ARSM…PRQR). Residues 335-374 (MPTTPATTPPGSMQPYGSAQSFDGSRQQMYNAPSQQSPYP) are compositionally biased toward polar residues. Residues 396–408 (GPPSSRPSGSAPS) show a composition bias toward low complexity. The segment covering 423 to 446 (EHGHQSHAGEEDGEHEQHDAEYTH) has biased composition (basic and acidic residues). The segment covering 542-553 (APPADMANPMPN) has biased composition (low complexity). The tract at residues 569–594 (KRGREGDDDLSRPVGDVPGMDMKRRK) is nuclear localization domain. The span at 570 to 579 (RGREGDDDLS) shows a compositional bias: basic and acidic residues.

Belongs to the EFG1/PHD1/stuA family.

The protein localises to the nucleus. Its function is as follows. Transcription factor that regulates asexual reproduction. Binds the StuA-response elements (StRE) with the consensus sequence 5'-(A/T)CGCG(T/A)N(A/C)-3' at the promoters of target genes. Controls conidiation by positively regulating the expression of brlA and abaA. Positively regulates the cephalosporin biosynthesis gene cluster. Also involved hyphal fragmentation and cell wall integrity. This is Cell pattern formation-associated protein stuA from Hapsidospora chrysogenum (strain ATCC 11550 / CBS 779.69 / DSM 880 / IAM 14645 / JCM 23072 / IMI 49137) (Acremonium chrysogenum).